The sequence spans 453 residues: Bifunctional protein GlmU (453 aa).

The tract at residues 1–225 is pyrophosphorylase; sequence MNIVILAAGT…EWETLGVNSK (225 aa). UDP-N-acetyl-alpha-D-glucosamine is bound by residues 6–9, K20, Q71, 76–77, 98–100, G135, E150, N165, and N223; these read LAAG, GT, and YGD. D100 is a binding site for Mg(2+). N223 provides a ligand contact to Mg(2+). Residues 226-246 form a linker region; that stretch reads QQLAELERIHQHNVADALLVA. Residues 247–453 form an N-acetyltransferase region; it reads GVTLADPARL…GYVRPTKKKS (207 aa). 2 residues coordinate UDP-N-acetyl-alpha-D-glucosamine: R329 and K347. H359 serves as the catalytic Proton acceptor. 2 residues coordinate UDP-N-acetyl-alpha-D-glucosamine: Y362 and N373. Residues A376, 382-383, S401, and A419 contribute to the acetyl-CoA site; that span reads NY.

The protein in the N-terminal section; belongs to the N-acetylglucosamine-1-phosphate uridyltransferase family. In the C-terminal section; belongs to the transferase hexapeptide repeat family. As to quaternary structure, homotrimer. Mg(2+) is required as a cofactor.

The protein localises to the cytoplasm. It carries out the reaction alpha-D-glucosamine 1-phosphate + acetyl-CoA = N-acetyl-alpha-D-glucosamine 1-phosphate + CoA + H(+). The catalysed reaction is N-acetyl-alpha-D-glucosamine 1-phosphate + UTP + H(+) = UDP-N-acetyl-alpha-D-glucosamine + diphosphate. It participates in nucleotide-sugar biosynthesis; UDP-N-acetyl-alpha-D-glucosamine biosynthesis; N-acetyl-alpha-D-glucosamine 1-phosphate from alpha-D-glucosamine 6-phosphate (route II): step 2/2. It functions in the pathway nucleotide-sugar biosynthesis; UDP-N-acetyl-alpha-D-glucosamine biosynthesis; UDP-N-acetyl-alpha-D-glucosamine from N-acetyl-alpha-D-glucosamine 1-phosphate: step 1/1. The protein operates within bacterial outer membrane biogenesis; LPS lipid A biosynthesis. Functionally, catalyzes the last two sequential reactions in the de novo biosynthetic pathway for UDP-N-acetylglucosamine (UDP-GlcNAc). The C-terminal domain catalyzes the transfer of acetyl group from acetyl coenzyme A to glucosamine-1-phosphate (GlcN-1-P) to produce N-acetylglucosamine-1-phosphate (GlcNAc-1-P), which is converted into UDP-GlcNAc by the transfer of uridine 5-monophosphate (from uridine 5-triphosphate), a reaction catalyzed by the N-terminal domain. The polypeptide is Bifunctional protein GlmU (Paraburkholderia phytofirmans (strain DSM 17436 / LMG 22146 / PsJN) (Burkholderia phytofirmans)).